The following is a 227-amino-acid chain: ATP-dependent dethiobiotin synthetase BioD (227 aa).

13 to 18 provides a ligand contact to ATP; it reads DIGKTY. Threonine 17 is a Mg(2+) binding site. Lysine 38 is an active-site residue. Substrate is bound at residue serine 42. ATP-binding positions include aspartate 55, 116-119, and 179-180; these read EGSG and NN. Mg(2+) contacts are provided by aspartate 55 and glutamate 116.

This sequence belongs to the dethiobiotin synthetase family. Homodimer. Mg(2+) is required as a cofactor.

It is found in the cytoplasm. The enzyme catalyses (7R,8S)-7,8-diammoniononanoate + CO2 + ATP = (4R,5S)-dethiobiotin + ADP + phosphate + 3 H(+). It participates in cofactor biosynthesis; biotin biosynthesis; biotin from 7,8-diaminononanoate: step 1/2. Catalyzes a mechanistically unusual reaction, the ATP-dependent insertion of CO2 between the N7 and N8 nitrogen atoms of 7,8-diaminopelargonic acid (DAPA, also called 7,8-diammoniononanoate) to form a ureido ring. This Clostridium botulinum (strain Langeland / NCTC 10281 / Type F) protein is ATP-dependent dethiobiotin synthetase BioD.